The sequence spans 90 residues: MEYSYPLNPDWTTEEMTIVVQFLEAIERAYEKGIDTQELKDKYRAFKHVVPAKGEEKRIGIDFEKASGYSAYKVMQLVKNATTSKIKMQP.

The protein belongs to the UPF0223 family.

In Listeria monocytogenes serotype 4a (strain HCC23), this protein is UPF0223 protein LMHCC_1569.